The primary structure comprises 705 residues: Phosphatidylinositol 4-phosphate 5-kinase 3 (705 aa).

7 MORN repeats span residues 58–80, 81–103, 104–126, 127–149, 150–172, 173–195, and 196–218; these read YNGG…DGCM, YEGE…SGAT, YEGQ…DGDT, YRGH…NGDG, YQGN…DGNE, YVGE…NGNR, and YDGL…EEKT. The PIPK domain maps to 321 to 701; that stretch reads TVTAGHKNYD…RFRDFINKIF (381 aa). Residues 661–682 are activation loop; that stretch reads YDITKKLEHAYKSLHADPASIS.

It localises to the cell membrane. It catalyses the reaction a 1,2-diacyl-sn-glycero-3-phospho-(1D-myo-inositol 4-phosphate) + ATP = a 1,2-diacyl-sn-glycero-3-phospho-(1D-myo-inositol-4,5-bisphosphate) + ADP + H(+). Functionally, with DRP1A and DRP2B, required for the precise coordination of polar ARAC3/ROP6 and ARAC4/ROP2 placement and subsequent root hair positioning during planar polarity formation in root hair-forming cells, probably by mediating the correct basal-to-planar polarity switching of D6PK into the polar, lipid-enriched domain. The polypeptide is Phosphatidylinositol 4-phosphate 5-kinase 3 (Arabidopsis thaliana (Mouse-ear cress)).